The sequence spans 86 residues: Large ribosomal subunit protein eL43 (86 aa).

Zn(2+) is bound by residues C38, C41, C57, and C60. Residues 38–60 (CPFCGSTGTVRRVSVGVWSCRKC) form a C4-type zinc finger.

This sequence belongs to the eukaryotic ribosomal protein eL43 family. Putative zinc-binding subfamily. In terms of assembly, part of the 50S ribosomal subunit. It depends on Zn(2+) as a cofactor.

In terms of biological role, binds to the 23S rRNA. The sequence is that of Large ribosomal subunit protein eL43 from Aeropyrum pernix (strain ATCC 700893 / DSM 11879 / JCM 9820 / NBRC 100138 / K1).